A 190-amino-acid polypeptide reads, in one-letter code: Peptidyl-tRNA hydrolase (190 aa).

Position 14 (phenylalanine 14) interacts with tRNA. Histidine 19 serves as the catalytic Proton acceptor. The tRNA site is built by methionine 64, asparagine 66, and asparagine 112.

Belongs to the PTH family. As to quaternary structure, monomer.

The protein resides in the cytoplasm. The catalysed reaction is an N-acyl-L-alpha-aminoacyl-tRNA + H2O = an N-acyl-L-amino acid + a tRNA + H(+). Its function is as follows. Hydrolyzes ribosome-free peptidyl-tRNAs (with 1 or more amino acids incorporated), which drop off the ribosome during protein synthesis, or as a result of ribosome stalling. Functionally, catalyzes the release of premature peptidyl moieties from peptidyl-tRNA molecules trapped in stalled 50S ribosomal subunits, and thus maintains levels of free tRNAs and 50S ribosomes. This Staphylococcus haemolyticus (strain JCSC1435) protein is Peptidyl-tRNA hydrolase.